A 353-amino-acid polypeptide reads, in one-letter code: Photosystem II D2 protein (353 aa).

Position 2 is an N-acetylthreonine (T2). T2 is subject to Phosphothreonine. Residues 41 to 61 (CAYFALGGWFTGTTFVTSWYT) traverse the membrane as a helical segment. H118 is a binding site for chlorophyll a. Residues 125 to 141 (GFMLRQFELARSVQLRP) traverse the membrane as a helical segment. Pheophytin a is bound by residues Q130 and N143. Residues 153-166 (VFVSVFLIYPLGQS) traverse the membrane as a helical segment. H198 lines the chlorophyll a pocket. Residues 208 to 228 (AALLCAIHGATVENTLFEDGD) traverse the membrane as a helical segment. A plastoquinone contacts are provided by H215 and F262. Position 215 (H215) interacts with Fe cation. H269 lines the Fe cation pocket. The chain crosses the membrane as a helical span at residues 279–295 (GLWMSALGVVGLALNLR).

The protein belongs to the reaction center PufL/M/PsbA/D family. As to quaternary structure, PSII is composed of 1 copy each of membrane proteins PsbA, PsbB, PsbC, PsbD, PsbE, PsbF, PsbH, PsbI, PsbJ, PsbK, PsbL, PsbM, PsbT, PsbX, PsbY, PsbZ, Psb30/Ycf12, at least 3 peripheral proteins of the oxygen-evolving complex and a large number of cofactors. It forms dimeric complexes. It depends on The D1/D2 heterodimer binds P680, chlorophylls that are the primary electron donor of PSII, and subsequent electron acceptors. It shares a non-heme iron and each subunit binds pheophytin, quinone, additional chlorophylls, carotenoids and lipids. There is also a Cl(-1) ion associated with D1 and D2, which is required for oxygen evolution. The PSII complex binds additional chlorophylls, carotenoids and specific lipids. as a cofactor.

It is found in the plastid. The protein resides in the chloroplast thylakoid membrane. It carries out the reaction 2 a plastoquinone + 4 hnu + 2 H2O = 2 a plastoquinol + O2. Functionally, photosystem II (PSII) is a light-driven water:plastoquinone oxidoreductase that uses light energy to abstract electrons from H(2)O, generating O(2) and a proton gradient subsequently used for ATP formation. It consists of a core antenna complex that captures photons, and an electron transfer chain that converts photonic excitation into a charge separation. The D1/D2 (PsbA/PsbD) reaction center heterodimer binds P680, the primary electron donor of PSII as well as several subsequent electron acceptors. D2 is needed for assembly of a stable PSII complex. This Lemna minor (Common duckweed) protein is Photosystem II D2 protein.